A 374-amino-acid polypeptide reads, in one-letter code: Chaperone protein DnaJ (374 aa).

Residues 5–70 form the J domain; it reads DYYEVLGVER…SKRAAFDQYG (66 aa). The segment at 133–211 adopts a CR-type zinc-finger fold; the sequence is GTTVSIRVPT…CHGEGRVEEY (79 aa). Positions 146, 149, 163, 166, 185, 188, 199, and 202 each coordinate Zn(2+). CXXCXGXG motif repeat units lie at residues 146–153, 163–170, 185–192, and 199–206; these read CQPCDGSG, CPTCGGIG, CPRCHGQG, and CTSCHGEG.

The protein belongs to the DnaJ family. In terms of assembly, homodimer. Requires Zn(2+) as cofactor.

The protein localises to the cytoplasm. Functionally, participates actively in the response to hyperosmotic and heat shock by preventing the aggregation of stress-denatured proteins and by disaggregating proteins, also in an autonomous, DnaK-independent fashion. Unfolded proteins bind initially to DnaJ; upon interaction with the DnaJ-bound protein, DnaK hydrolyzes its bound ATP, resulting in the formation of a stable complex. GrpE releases ADP from DnaK; ATP binding to DnaK triggers the release of the substrate protein, thus completing the reaction cycle. Several rounds of ATP-dependent interactions between DnaJ, DnaK and GrpE are required for fully efficient folding. Also involved, together with DnaK and GrpE, in the DNA replication of plasmids through activation of initiation proteins. In Pseudomonas putida (strain GB-1), this protein is Chaperone protein DnaJ.